The sequence spans 247 residues: Cell division protein ZapD (247 aa).

This sequence belongs to the ZapD family. In terms of assembly, interacts with FtsZ.

It is found in the cytoplasm. Its function is as follows. Cell division factor that enhances FtsZ-ring assembly. Directly interacts with FtsZ and promotes bundling of FtsZ protofilaments, with a reduction in FtsZ GTPase activity. The chain is Cell division protein ZapD from Erwinia tasmaniensis (strain DSM 17950 / CFBP 7177 / CIP 109463 / NCPPB 4357 / Et1/99).